A 218-amino-acid chain; its full sequence is Small ribosomal subunit protein uS3c (218 aa).

The KH type-2 domain maps to 47–118; sequence VQKHMRISSG…RLNIAIARVP (72 aa).

This sequence belongs to the universal ribosomal protein uS3 family. In terms of assembly, part of the 30S ribosomal subunit.

It localises to the plastid. The protein localises to the chloroplast. This chain is Small ribosomal subunit protein uS3c (rps3), found in Nuphar advena (Common spatterdock).